A 350-amino-acid chain; its full sequence is Ornithine carbamoyltransferase, mitochondrial (350 aa).

The transit peptide at 1-30 directs the protein to the mitochondrion; it reads MLHHMRTIINASWRYGNKCIVRQFGFSQTY. Carbamoyl phosphate contacts are provided by residues 86-90, Arg137, and His164; that span reads STRTR. L-ornithine is bound at residue Arg137. Residues Asn195, 259 to 263, 298 to 301, and Arg326 each bind L-ornithine; these read DTWVS and HCLP. The active site involves Cys299. Arg326 contributes to the carbamoyl phosphate binding site.

The protein belongs to the aspartate/ornithine carbamoyltransferase superfamily. OTCase family. In terms of assembly, homotrimer. As to expression, liver.

Its subcellular location is the mitochondrion matrix. The catalysed reaction is carbamoyl phosphate + L-ornithine = L-citrulline + phosphate + H(+). It participates in nitrogen metabolism; urea cycle; L-citrulline from L-ornithine and carbamoyl phosphate: step 1/1. OTC is necessary for the tadpoles transition from an ammonotelic, aquatic larva to a ureotelic, terrestrial adult. The polypeptide is Ornithine carbamoyltransferase, mitochondrial (Aquarana catesbeiana (American bullfrog)).